Here is a 260-residue protein sequence, read N- to C-terminus: MKANNHFKDFAWKKCLLGASVVALLVGCSPHIIETNEVALKLNYHPASEKVQALDEKILLLRPAFQYSDNIAKEYENKFKNQTALKVEQILQNQGYKVISVDSSDKDDLSFSQKKEGYLAVAMNGEIVLRPDPKRTIQKKSEPGLLFSTGLDKMEGVLIPAGFVKVTILEPMSGESLDSFTMDLSELDIQEKFLKTTHSSHSGGLVSTMVKGTDNSNDAIKSALNKIFANIMQEIDKKLTQKNLESYQKDAKELKGKRNR.

An N-terminal signal peptide occupies residues 1–27 (MKANNHFKDFAWKKCLLGASVVALLVG). A lipid anchor (N-palmitoyl cysteine) is attached at cysteine 28. Cysteine 28 is lipidated: S-diacylglycerol cysteine.

It is found in the cell outer membrane. The chain is Neuraminyllactose-binding hemagglutinin (hpaA) from Helicobacter pylori (strain ATCC 700392 / 26695) (Campylobacter pylori).